A 1705-amino-acid chain; its full sequence is Intersectin-1 (1705 aa).

2 consecutive EH domains span residues 21 to 109 (ERAK…PVAM) and 220 to 309 (SRLK…SFRR). EF-hand domains lie at 53-88 (LPQPVLAQIWALADMNNDGRMDQLEFSIAMKLIKLK) and 253-288 (LPQSQLATIWNLSDIDQDGKLTAEEFILAMHLIDVA). Ca(2+)-binding residues include Asp-66, Asn-68, Asp-70, Arg-72, Glu-77, Asp-266, Asp-268, Asp-270, Lys-272, and Glu-277. Disordered regions lie at residues 322–355 (VSVDQRLPEEPEEEEPQNADKKLPVTFEDKKREN), 386–433 (RAEQ…ERRE), and 668–708 (RYKF…PPEP). Residues 325-697 (DQRLPEEPEE…VEKKPEIQEK (373 aa)) form a KLERQ region. Residues 339 to 355 (NADKKLPVTFEDKKREN) show a composition bias toward basic and acidic residues. Residues 350–687 (DKKRENFERG…KREESIQKCE (338 aa)) adopt a coiled-coil conformation. Over residues 668-699 (RYKFQDEEKEKREESIQKCEVEKKPEIQEKPN) the composition is skewed to basic and acidic residues. In terms of domain architecture, SH3 1 spans 732 to 793 (VKVVYYRALY…PANYAERMPE (62 aa)). Positions 823-833 (AFTNTSTNSNN) are enriched in low complexity. The disordered stretch occupies residues 823-851 (AFTNTSTNSNNWADFSSTWPTNNTDKVES). The segment covering 834 to 846 (WADFSSTWPTNNT) has biased composition (polar residues). In terms of domain architecture, SH3 2 spans 897–955 (VEGLQAQALYPWRAKKDNHLNFNKNDVITVLEQQDMWWFGEVQGQKGWFPKSYVKLISG). The tract at residues 959-978 (KSTSIDSTSSESPASLKRVS) is disordered. Residues 960 to 973 (STSIDSTSSESPAS) are compositionally biased toward low complexity. 3 SH3 domains span residues 986 to 1044 (IQGE…PKDS), 1058 to 1122 (KKPE…LLSP), and 1139 to 1198 (PPTC…LTTD). Positions 1088–1111 (RKKNPGGWWEGELQARGKKRQIGW) match the Bipartite nuclear localization signal; in isoform 2 motif. One can recognise a DH domain in the interval 1221–1407 (KRQGYIHELI…EELCSQVNEG (187 aa)). Positions 1446 to 1555 (KFLHSGKLYK…WVQKIKAASE (110 aa)) constitute a PH domain. The C2 domain maps to 1563-1679 (KKREKAYLVR…KKDQGSKGPV (117 aa)). Residues Asp-1651, Ser-1654, and Asp-1657 each contribute to the Ca(2+) site.

As to quaternary structure, binds epn1 and epn2. Requires Ca(2+) as cofactor.

Its subcellular location is the endomembrane system. The protein localises to the synapse. It is found in the synaptosome. The protein resides in the cell projection. It localises to the lamellipodium. Its subcellular location is the cell membrane. The protein localises to the membrane. It is found in the clathrin-coated pit. The protein resides in the recycling endosome. It localises to the cytoplasm. Its subcellular location is the nucleus envelope. In terms of biological role, adapter protein that provides a link between the endocytic membrane traffic and the actin assembly machinery. Acts as a guanine nucleotide exchange factor (GEF) for cdc42, and thereby stimulates actin nucleation mediated by wasl and the arp2/3 complex. Involved in endocytosis of activated egfr, and probably also other growth factor receptors. The chain is Intersectin-1 (itsn1) from Xenopus laevis (African clawed frog).